We begin with the raw amino-acid sequence, 159 residues long: Bacterioferritin (159 aa).

The Ferritin-like diiron domain maps to 1–145 (MQGDPEVLRL…TQLELMDKLG (145 aa)). E51 is a binding site for Fe cation. M52 is a binding site for heme b. Residues H54, E94, E127, and H130 each contribute to the Fe cation site.

This sequence belongs to the bacterioferritin family. As to quaternary structure, homooligomer of 24 subunits, arranged as 12 dimers, that are packed together to form an approximately spherical molecule with a central cavity, in which large amounts of iron can be deposited. The cofactor is heme b.

The enzyme catalyses 4 Fe(2+) + O2 + 4 H(+) = 4 Fe(3+) + 2 H2O. It catalyses the reaction Fe(2+)(in) = Fe(2+)(out). Functionally, iron-storage protein, whose ferroxidase center binds Fe(2+), oxidizes it using dioxygen to Fe(3+), and participates in the subsequent Fe(3+) oxide mineral core formation within the central cavity of the BFR protein shell. The protein is Bacterioferritin (bfr) of Mycobacterium avium.